Consider the following 150-residue polypeptide: MSTVPVVQGAGSSNSAQDISTRPLTLKERISNLLSSTAFKVGLVVIGLLLVIATLIFLVSAASFVNAIYLVAIPAILGCVNICVGILSMEGHCSPERWILCKKVLKTSEDIIDDGQINNSNKVFTDERLNAIGGVVESLSRRNSLVDQTQ.

Helical transmembrane passes span 41 to 61 (VGLVVIGLLLVIATLIFLVSA) and 67 to 87 (AIYLVAIPAILGCVNICVGIL).

Its subcellular location is the membrane. This Chlamydia trachomatis serovar D (strain ATCC VR-885 / DSM 19411 / UW-3/Cx) protein is Sulfur-rich protein, serovar D (srp).